The sequence spans 388 residues: Myosin light chain kinase family member 4 (388 aa).

One can recognise a Protein kinase domain in the interval 106-361; the sequence is VSKTEILGGG…ASEALKHPWL (256 aa). ATP is bound by residues 112–120 and Lys135; that span reads LGGGRFGQV. The active-site Proton acceptor is the Asp227.

Belongs to the protein kinase superfamily. CAMK Ser/Thr protein kinase family.

The enzyme catalyses L-seryl-[protein] + ATP = O-phospho-L-seryl-[protein] + ADP + H(+). The catalysed reaction is L-threonyl-[protein] + ATP = O-phospho-L-threonyl-[protein] + ADP + H(+). In Homo sapiens (Human), this protein is Myosin light chain kinase family member 4 (MYLK4).